The chain runs to 583 residues: Cell division protein FtsZ (583 aa).

GTP contacts are provided by residues 24–28 (GGGGN), 111–113 (GTG), Glu-142, Arg-146, and Asp-190. 2 disordered regions span residues 391–425 (HQQP…VQQA) and 510–583 (TNSL…RQSN). Residues 412–425 (APAALRPAQPVQQA) show a composition bias toward low complexity.

It belongs to the FtsZ family. As to quaternary structure, homodimer. Polymerizes to form a dynamic ring structure in a strictly GTP-dependent manner. Interacts directly with several other division proteins.

Its subcellular location is the cytoplasm. Essential cell division protein that forms a contractile ring structure (Z ring) at the future cell division site. The regulation of the ring assembly controls the timing and the location of cell division. One of the functions of the FtsZ ring is to recruit other cell division proteins to the septum to produce a new cell wall between the dividing cells. Binds GTP and shows GTPase activity. The sequence is that of Cell division protein FtsZ from Rhizobium radiobacter (Agrobacterium tumefaciens).